We begin with the raw amino-acid sequence, 520 residues long: Amine oxidase [flavin-containing] B (520 aa).

N-acetylserine is present on S2. The Cytoplasmic portion of the chain corresponds to 2–489 (SNKCDVIVVG…TFLERHLPSV (488 aa)). At K52 the chain carries N6-acetyllysine. C397 bears the S-8alpha-FAD cysteine mark. Residues 490 to 516 (PGLLKLLGLTTILSATALGFLAHKKGL) traverse the membrane as a helical; Anchor for type IV membrane protein segment. The Mitochondrial intermembrane portion of the chain corresponds to 517-520 (FVRF).

The protein belongs to the flavin monoamine oxidase family. As to quaternary structure, monomer, homo- or heterodimer (containing two subunits of similar size). Each subunit contains a covalently bound flavin. Enzymatically active as monomer. It depends on FAD as a cofactor.

The protein resides in the mitochondrion outer membrane. It catalyses the reaction a secondary aliphatic amine + O2 + H2O = a primary amine + an aldehyde + H2O2. The enzyme catalyses (R)-adrenaline + O2 + H2O = (R)-3,4-dihydroxymandelaldehyde + methylamine + H2O2. It carries out the reaction a primary methyl amine + O2 + H2O = an aldehyde + H2O2 + NH4(+). The catalysed reaction is dopamine + O2 + H2O = 3,4-dihydroxyphenylacetaldehyde + H2O2 + NH4(+). It catalyses the reaction tyramine + O2 + H2O = (4-hydroxyphenyl)acetaldehyde + H2O2 + NH4(+). The enzyme catalyses (R)-noradrenaline + O2 + H2O = (R)-3,4-dihydroxymandelaldehyde + H2O2 + NH4(+). It carries out the reaction benzylamine + O2 + H2O = benzaldehyde + H2O2 + NH4(+). The catalysed reaction is 2-phenylethylamine + O2 + H2O = 2-phenylacetaldehyde + H2O2 + NH4(+). It catalyses the reaction N-acetylputrescine + O2 + H2O = 4-acetamidobutanal + H2O2 + NH4(+). Functionally, catalyzes the oxidative deamination of primary and some secondary amines such as neurotransmitters, and exogenous amines including the tertiary amine, neurotoxin 1-methyl-4-phenyl-1,2,3,6-tetrahydropyridine (MPTP), with concomitant reduction of oxygen to hydrogen peroxide and participates in the metabolism of neuroactive and vasoactive amines in the central nervous system and peripheral tissues. Preferentially degrades benzylamine and phenylethylamine. This chain is Amine oxidase [flavin-containing] B, found in Rattus norvegicus (Rat).